We begin with the raw amino-acid sequence, 340 residues long: Replication initiation protein (340 aa).

Positions 38-58 are disordered; it reads PERKRTKRRRGEHSTKPKCEN.

The polypeptide is Replication initiation protein (repA1) (Escherichia coli).